The sequence spans 474 residues: Variant surface glycoprotein MITAT 1.5 (474 aa).

The first 22 residues, 1-22 (MIHSNKVATVVLALISSWPADG), serve as a signal peptide directing secretion. 2 disulfide bridges follow: C37-C161 and C144-C214. N-linked (GlcNAc...) asparagine glycosylation is found at N74 and N95. N329 is a glycosylation site (N-linked (GlcNAc...) asparagine). Residues 388-449 (AKDGEGQKNQ…ETDEPDKEKC (62 aa)) form a disordered region. 2 stretches are compositionally biased toward basic and acidic residues: residues 414 to 423 (TNKEACEKEN) and 435 to 449 (KGKDGETDEPDKEKC). N451 carries the GPI-anchor amidated asparagine lipid modification. A propeptide spans 452-474 (GSFLTSKQFAFSVVSAAFMALLF) (removed in mature form).

It is found in the cell membrane. Its function is as follows. VSG forms a coat on the surface of the parasite. The trypanosome evades the immune response of the host by expressing a series of antigenically distinct VSGs from an estimated 1000 VSG genes. The polypeptide is Variant surface glycoprotein MITAT 1.5 (Trypanosoma brucei brucei).